A 795-amino-acid chain; its full sequence is Phenylalanine--tRNA ligase beta subunit (795 aa).

Positions 39–148 constitute a tRNA-binding domain; it reads ADEFHTVVVG…ADAPVGEDYR (110 aa). The B5 domain occupies 401–476; it reads PKRDGITLRA…RVYGYNSIQA (76 aa). Positions 454, 460, 463, and 464 each coordinate Mg(2+). Positions 701–794 constitute an FDX-ACB domain; sequence SRYPSIRRDL…LKSEFNATLR (94 aa).

This sequence belongs to the phenylalanyl-tRNA synthetase beta subunit family. Type 1 subfamily. As to quaternary structure, tetramer of two alpha and two beta subunits. The cofactor is Mg(2+).

Its subcellular location is the cytoplasm. It catalyses the reaction tRNA(Phe) + L-phenylalanine + ATP = L-phenylalanyl-tRNA(Phe) + AMP + diphosphate + H(+). This Idiomarina loihiensis (strain ATCC BAA-735 / DSM 15497 / L2-TR) protein is Phenylalanine--tRNA ligase beta subunit.